Here is a 214-residue protein sequence, read N- to C-terminus: Outer-membrane lipoprotein LolB (214 aa).

The signal sequence occupies residues 1-30 (MKHVSSPHPCAAIASARVWLGLVLVALLAG). Residue cysteine 31 is the site of N-palmitoyl cysteine attachment. Cysteine 31 carries S-diacylglycerol cysteine lipidation.

This sequence belongs to the LolB family. In terms of assembly, monomer.

Its subcellular location is the cell outer membrane. Functionally, plays a critical role in the incorporation of lipoproteins in the outer membrane after they are released by the LolA protein. The sequence is that of Outer-membrane lipoprotein LolB from Chromohalobacter salexigens (strain ATCC BAA-138 / DSM 3043 / CIP 106854 / NCIMB 13768 / 1H11).